We begin with the raw amino-acid sequence, 265 residues long: Thiazole synthase (265 aa).

Lys-106 acts as the Schiff-base intermediate with DXP in catalysis. 1-deoxy-D-xylulose 5-phosphate is bound by residues Gly-167, 193-194 (AG), and 215-216 (NT). A disordered region spans residues 245-265 (GRIPRRARAEPSSPQLGLVGS).

This sequence belongs to the ThiG family. Homotetramer. Forms heterodimers with either ThiH or ThiS.

Its subcellular location is the cytoplasm. It carries out the reaction [ThiS sulfur-carrier protein]-C-terminal-Gly-aminoethanethioate + 2-iminoacetate + 1-deoxy-D-xylulose 5-phosphate = [ThiS sulfur-carrier protein]-C-terminal Gly-Gly + 2-[(2R,5Z)-2-carboxy-4-methylthiazol-5(2H)-ylidene]ethyl phosphate + 2 H2O + H(+). Its pathway is cofactor biosynthesis; thiamine diphosphate biosynthesis. Functionally, catalyzes the rearrangement of 1-deoxy-D-xylulose 5-phosphate (DXP) to produce the thiazole phosphate moiety of thiamine. Sulfur is provided by the thiocarboxylate moiety of the carrier protein ThiS. In vitro, sulfur can be provided by H(2)S. The chain is Thiazole synthase from Methylobacterium sp. (strain 4-46).